Consider the following 153-residue polypeptide: uncharacterized protein (153 aa).

The segment at 19 to 46 (EKSTRLEEDAMESEPLAGTKTRGRGRRR) is disordered.

This is an uncharacterized protein from Homo sapiens (Human).